The sequence spans 808 residues: uncharacterized protein (808 aa).

35 to 42 (GPNNVGKT) is a binding site for ATP.

This is an uncharacterized protein from Methanocaldococcus jannaschii (strain ATCC 43067 / DSM 2661 / JAL-1 / JCM 10045 / NBRC 100440) (Methanococcus jannaschii).